The primary structure comprises 132 residues: MAAPKQAARKPRRRDRKSVPVGQAHIKSTFNNTIISITDPSGAVVSWASGGDVGFKGSRKSTPYAAGMAAESAARKAMEHGVKKVDVFVKGPGSGRETAIRSLQSAGLEVGSITDVTPQAHNGVRPPKRRRV.

The disordered stretch occupies residues 1–24; sequence MAAPKQAARKPRRRDRKSVPVGQA. Residues 7 to 16 show a composition bias toward basic residues; the sequence is AARKPRRRDR.

This sequence belongs to the universal ribosomal protein uS11 family. In terms of assembly, part of the 30S ribosomal subunit. Interacts with proteins S7 and S18. Binds to IF-3.

Its function is as follows. Located on the platform of the 30S subunit, it bridges several disparate RNA helices of the 16S rRNA. Forms part of the Shine-Dalgarno cleft in the 70S ribosome. The sequence is that of Small ribosomal subunit protein uS11 from Bifidobacterium longum (strain DJO10A).